Here is a 121-residue protein sequence, read N- to C-terminus: Apoptin (121 aa).

Disordered stretches follow at residues 1 to 28 (MNAH…LETP) and 57 to 95 (LRSA…PSEY). Polar residues predominate over residues 58–70 (RSATADNSENTGF).

This sequence belongs to the gyrovirus apoptin family.

The protein resides in the host nucleus. Its function is as follows. May act as transcriptional regulator. Induces apoptosis in infected cells. Element of infectious replication cycle. This chain is Apoptin (VP3), found in Gallus gallus (Chicken).